Consider the following 374-residue polypeptide: S-adenosylmethionine:tRNA ribosyltransferase-isomerase (374 aa).

The protein belongs to the QueA family. As to quaternary structure, monomer.

Its subcellular location is the cytoplasm. The catalysed reaction is 7-aminomethyl-7-carbaguanosine(34) in tRNA + S-adenosyl-L-methionine = epoxyqueuosine(34) in tRNA + adenine + L-methionine + 2 H(+). It functions in the pathway tRNA modification; tRNA-queuosine biosynthesis. Functionally, transfers and isomerizes the ribose moiety from AdoMet to the 7-aminomethyl group of 7-deazaguanine (preQ1-tRNA) to give epoxyqueuosine (oQ-tRNA). This is S-adenosylmethionine:tRNA ribosyltransferase-isomerase from Sorangium cellulosum (strain So ce56) (Polyangium cellulosum (strain So ce56)).